Here is a 393-residue protein sequence, read N- to C-terminus: Dual-specificity RNA methyltransferase RlmN (393 aa).

The active-site Proton acceptor is glutamate 114. The Radical SAM core domain maps to 120 to 359 (EDDRATLCVS…VIVRKTRGDD (240 aa)). An intrachain disulfide couples cysteine 127 to cysteine 364. [4Fe-4S] cluster is bound by residues cysteine 134, cysteine 138, and cysteine 141. S-adenosyl-L-methionine-binding positions include 188-189 (GE), serine 220, 242-244 (SLH), and asparagine 321. Cysteine 364 serves as the catalytic S-methylcysteine intermediate.

It belongs to the radical SAM superfamily. RlmN family. The cofactor is [4Fe-4S] cluster.

Its subcellular location is the cytoplasm. It catalyses the reaction adenosine(2503) in 23S rRNA + 2 reduced [2Fe-2S]-[ferredoxin] + 2 S-adenosyl-L-methionine = 2-methyladenosine(2503) in 23S rRNA + 5'-deoxyadenosine + L-methionine + 2 oxidized [2Fe-2S]-[ferredoxin] + S-adenosyl-L-homocysteine. It carries out the reaction adenosine(37) in tRNA + 2 reduced [2Fe-2S]-[ferredoxin] + 2 S-adenosyl-L-methionine = 2-methyladenosine(37) in tRNA + 5'-deoxyadenosine + L-methionine + 2 oxidized [2Fe-2S]-[ferredoxin] + S-adenosyl-L-homocysteine. Functionally, specifically methylates position 2 of adenine 2503 in 23S rRNA and position 2 of adenine 37 in tRNAs. m2A2503 modification seems to play a crucial role in the proofreading step occurring at the peptidyl transferase center and thus would serve to optimize ribosomal fidelity. This chain is Dual-specificity RNA methyltransferase RlmN, found in Actinobacillus pleuropneumoniae serotype 3 (strain JL03).